The following is a 359-amino-acid chain: Prostaglandin F2-alpha receptor (359 aa).

At 1–31 (MSMNNSKQLVSPAAALLSNTTCQTENRLSVF) the chain is on the extracellular side. N-linked (GlcNAc...) asparagine glycosylation is found at N4 and N19. A helical membrane pass occupies residues 32–54 (FSVIFMTVGILSNSLAIAILMKA). The Cytoplasmic segment spans residues 55–69 (YQRFRQKSKASFLLL). A helical membrane pass occupies residues 70-90 (ASGLVITDFFGHLINGAIAVF). Over 91-109 (VYASDKEWIRFDQSNVLCS) the chain is Extracellular. A disulfide bridge links C108 with C186. A helical transmembrane segment spans residues 110–131 (IFGICMVFSGLCPLLLGSVMAI). The Cytoplasmic segment spans residues 132-152 (ERCIGVTKPIFHSTKITSKHV). The helical transmembrane segment at 153–175 (KMMLSGVCLFAVFIALLPILGHR) threads the bilayer. The Extracellular segment spans residues 176–198 (DYKIQASRTWCFYNTEDIKDWED). The helical transmembrane segment at 199-224 (RFYLLLFSFLGLLALGVSLLCNAITG) threads the bilayer. At 225–250 (ITLLRVKFKSQQHRQGRSHHLEMVIQ) the chain is on the cytoplasmic side. Residues 251–267 (LLAIMCVSCICWSPFLV) form a helical membrane-spanning segment. The Extracellular portion of the chain corresponds to 268–285 (TMANIGINGNHSLETCET). Residues 286-307 (TLFALRMATWNQILDPWVYILL) traverse the membrane as a helical segment. Topologically, residues 308-359 (RKAVLKNLYKLASQCCGVHVISLHIWELSSIKNSLKVAAISESPVAEKSAST) are cytoplasmic.

The protein belongs to the G-protein coupled receptor 1 family. In terms of assembly, isoform 1 can form heterodimers with isoform 5 (and probably other isoforms). As to expression, eye.

The protein resides in the cell membrane. In terms of biological role, receptor for prostaglandin F2-alpha (PGF2-alpha). The activity of this receptor is mediated by G proteins which activate a phosphatidylinositol-calcium second messenger system. Initiates luteolysis in the corpus luteum. Isoforms 2 to 7 do not bind PGF2-alpha but are proposed to modulate signaling by participating in variant receptor complexes; heterodimers between isoform 1 and isoform 5 are proposed to be a receptor for prostamides including the synthetic analog bimatoprost. In Homo sapiens (Human), this protein is Prostaglandin F2-alpha receptor (PTGFR).